Here is a 523-residue protein sequence, read N- to C-terminus: MAALLRRLLQRERPSAASGRPVGRREANLGTDAGVAVRVRFAPSPTGFLHLGGLRTALYNYIFAKKYQGSFILRLEDTDQTRVVPGAAENIEDMLEWAGIPPDESPRRGGPAGPYQQSQRLELYAQATEALLKTGAAYPCFCSPQRLELLKKEALRNHQTPRYDNRCRNMSQEQVAQKLAKDPKPAIRFRLEQVVPAFQDLVYGWNRHEVASVEGDPVIMKSDGFPTYHLACVVDDHHMGISHVLRGSEWLVSTAKHLLLYQALGWQPPHFAHLPLLLNRDGSKLSKRQGDVFLEHFAADGFLPDSLLDIITNCGSGFAENQMGRTLPELITQFNLTQVTCHSALLDLEKLPEFNRLHLQRLVSNESQRRQLVGKLQVLVEEAFGCQLQNRDVLNPVYVERILLLRQGHICRLQDLVSPVYSYLWTRPAVGRAQLDAISEKVDVIAKRVLGLLERSSMSLTQDMLNGELKKLSEGLEGTKYSNVMKLLRMALSGQQQGPPVAEMMLALGPKEVRERIQKVVSS.

The transit peptide at 1–41 (MAALLRRLLQRERPSAASGRPVGRREANLGTDAGVAVRVRF) directs the protein to the mitochondrion. 40–42 (RFA) provides a ligand contact to L-glutamate. Positions 45–53 (PTGFLHLGG) match the 'HIGH' region motif. His-50 provides a ligand contact to ATP. L-glutamate contacts are provided by residues Glu-76, 228 to 232 (YHLAC), and Arg-246. Glu-249 lines the ATP pocket. Residue Lys-256 is modified to N6-succinyllysine. 284-288 (KLSKR) contacts ATP. A 'KMSKS' region motif is present at residues 284–288 (KLSKR). Lys-486 bears the N6-acetyllysine mark.

It belongs to the class-I aminoacyl-tRNA synthetase family. Glutamate--tRNA ligase type 1 subfamily.

Its subcellular location is the mitochondrion matrix. It carries out the reaction tRNA(Glx) + L-glutamate + ATP = L-glutamyl-tRNA(Glx) + AMP + diphosphate. The enzyme catalyses tRNA(Glu) + L-glutamate + ATP = L-glutamyl-tRNA(Glu) + AMP + diphosphate. It catalyses the reaction tRNA(Gln) + L-glutamate + ATP = L-glutamyl-tRNA(Gln) + AMP + diphosphate. Non-discriminating glutamyl-tRNA synthetase that catalyzes aminoacylation of both mitochondrial tRNA(Glu) and tRNA(Gln) and participates in RNA aminoacylation for mitochondrial protein translation. Attachs glutamate to tRNA(Glu) or tRNA(Gln) in a two-step reaction: glutamate is first activated by ATP to form Glu-AMP and then transferred to the acceptor end of tRNA(Glu) or tRNA(Gln). In vitro, cytoplasmic tRNA(Gln) is slightly glutamylated, but with low activity. The protein is Nondiscriminating glutamyl-tRNA synthetase EARS2, mitochondrial of Homo sapiens (Human).